The primary structure comprises 572 residues: Proline--tRNA ligase (572 aa).

Belongs to the class-II aminoacyl-tRNA synthetase family. ProS type 1 subfamily. As to quaternary structure, homodimer.

Its subcellular location is the cytoplasm. The enzyme catalyses tRNA(Pro) + L-proline + ATP = L-prolyl-tRNA(Pro) + AMP + diphosphate. Catalyzes the attachment of proline to tRNA(Pro) in a two-step reaction: proline is first activated by ATP to form Pro-AMP and then transferred to the acceptor end of tRNA(Pro). As ProRS can inadvertently accommodate and process non-cognate amino acids such as alanine and cysteine, to avoid such errors it has two additional distinct editing activities against alanine. One activity is designated as 'pretransfer' editing and involves the tRNA(Pro)-independent hydrolysis of activated Ala-AMP. The other activity is designated 'posttransfer' editing and involves deacylation of mischarged Ala-tRNA(Pro). The misacylated Cys-tRNA(Pro) is not edited by ProRS. In Serratia proteamaculans (strain 568), this protein is Proline--tRNA ligase.